Reading from the N-terminus, the 294-residue chain is Nucleotide-binding protein lp_0779 (294 aa).

12–19 (GMSGAGKT) contacts ATP. A GTP-binding site is contributed by 62 to 65 (DLRS).

Belongs to the RapZ-like family.

In terms of biological role, displays ATPase and GTPase activities. This is Nucleotide-binding protein lp_0779 from Lactiplantibacillus plantarum (strain ATCC BAA-793 / NCIMB 8826 / WCFS1) (Lactobacillus plantarum).